Consider the following 551-residue polypeptide: Palmdelphin (551 aa).

Methionine 1 bears the N-acetylmethionine mark. The stretch at 12 to 106 forms a coiled coil; it reads QAITDKRKIQ…LQISTKEEAI (95 aa). A Glycyl lysine isopeptide (Lys-Gly) (interchain with G-Cter in SUMO2) cross-link involves residue lysine 125. Serine 135 carries the post-translational modification Phosphoserine. Lysine 179 is covalently cross-linked (Glycyl lysine isopeptide (Lys-Gly) (interchain with G-Cter in SUMO1); alternate). A Glycyl lysine isopeptide (Lys-Gly) (interchain with G-Cter in SUMO2); alternate cross-link involves residue lysine 179. Residues 248-259 show a composition bias toward basic and acidic residues; sequence ERNSKSPTEYHE. Residues 248-280 are disordered; sequence ERNSKSPTEYHEPVYANPFYRPTTPQRETVTPG. Over residues 270–280 the composition is skewed to polar residues; that stretch reads TTPQRETVTPG. Position 271 is a phosphothreonine (threonine 271). Residues serine 321, serine 370, serine 384, and serine 385 each carry the phosphoserine modification. 2 disordered regions span residues 342–392 and 449–535; these read TPQK…QEDE and DEEE…EDPS. A compositionally biased stretch (basic and acidic residues) spans 484–495; sequence KRSEASPHENTN. Serine 498, serine 515, and serine 520 each carry phosphoserine.

This sequence belongs to the paralemmin family. Interacts with GLUL. In terms of processing, phosphorylated. In terms of tissue distribution, ubiquitous. Most abundant in cardiac and skeletal muscle.

The protein resides in the cytoplasm. It is found in the cell projection. Its subcellular location is the dendrite. It localises to the dendritic spine. This is Palmdelphin (PALMD) from Homo sapiens (Human).